We begin with the raw amino-acid sequence, 171 residues long: Putative RING finger protein 027R (171 aa).

The RING-type zinc finger occupies 121 to 163; that stretch reads CAVCMTNPVWVDFVWSCKHISTCIKCLKMLSRGSNGFKCPICR.

Belongs to the IIV-6 157L family.

The chain is Putative RING finger protein 027R from Aedes vexans (Inland floodwater mosquito).